Here is a 67-residue protein sequence, read N- to C-terminus: Protein AaeX (67 aa).

The next 2 helical transmembrane spans lie at 10-30 (FGLS…LFFV) and 43-63 (FVWH…YLLF).

Belongs to the AaeX family.

Its subcellular location is the cell membrane. This Pectobacterium atrosepticum (strain SCRI 1043 / ATCC BAA-672) (Erwinia carotovora subsp. atroseptica) protein is Protein AaeX.